Here is a 280-residue protein sequence, read N- to C-terminus: Alpha-methyl-mannoside-specific lectin (280 aa).

The N-terminal stretch at 1 to 26 (MAISKKILPLLSIATIFLLLLNKAHS) is a signal peptide. Residues D114 and G134 each coordinate a carbohydrate. Mn(2+) is bound by residues E156 and D158. The Ca(2+) site is built by D158 and F160. A carbohydrate is bound by residues S165 and N166. 2 residues coordinate Ca(2+): N166 and D169. Mn(2+) is bound by residues D169 and H174. A carbohydrate is bound by residues G248 and Q250.

This sequence belongs to the leguminous lectin family. As to quaternary structure, homodimer. In terms of processing, glycosylated.

Alpha-methyl-D-mannoside-specific lectin. Has hemagglutinating activity towards rabbit erythrocytes. Binds to cytokinins and significantly inhibits physiological effects of cytokinin activity such as cotyledon expansion and delayed leaf senescence. The sequence is that of Alpha-methyl-mannoside-specific lectin from Arachis hypogaea (Peanut).